The chain runs to 251 residues: MKKAGLLFLVMIVIAVVASGIGYWKLTGEESDTLRKIVLEECLPNQQQNQNPSPCAEVKPNAGYVVLKDLNGPLQYLLMPTYRINGTESPLLTDPSTPNFFWLAWQARDFMSKKYGQPVPDRAVSLAINSRTGRTQNHFHIHISCIRPDVREQLDKNLANISSRWLPLPGGLRGHEYLARRVTESELVQRSPFMMLAEEVPEAREHMGSYGLAMVRQSDNSFVLLATQRNLLTLNRASAEEIQDHECEILR.

The helical transmembrane segment at 4 to 24 threads the bilayer; that stretch reads AGLLFLVMIVIAVVASGIGYW.

Belongs to the Cdh family.

Its subcellular location is the cell inner membrane. It carries out the reaction a CDP-1,2-diacyl-sn-glycerol + H2O = a 1,2-diacyl-sn-glycero-3-phosphate + CMP + 2 H(+). The protein operates within phospholipid metabolism; CDP-diacylglycerol degradation; phosphatidate from CDP-diacylglycerol: step 1/1. In Escherichia coli O8 (strain IAI1), this protein is CDP-diacylglycerol pyrophosphatase.